The following is a 752-amino-acid chain: Probable cell surface ferric reductase kap2 (752 aa).

The chain crosses the membrane as a helical span at residues 40-60 (GKYGLGWVYFSVILLAISTII). Asparagine 118 and asparagine 133 each carry an N-linked (GlcNAc...) asparagine glycan. A run of 2 helical transmembrane segments spans residues 157–177 (IGFP…FVTL) and 195–215 (PPLA…IIAL). A Ferric oxidoreductase domain is found at 201–348 (AGMIAVAMIP…WATVAIWMLS (148 aa)). Residues histidine 237 and histidine 251 each contribute to the heme site. Transmembrane regions (helical) follow at residues 241 to 261 (GYLC…TPIW), 281 to 301 (GTGW…LPIL), and 306 to 326 (YELF…MIFW). The heme site is built by histidine 313 and histidine 327. A helical transmembrane segment spans residues 331 to 351 (FLASWDYLWATVAIWMLSYAV). An FAD-binding FR-type domain is found at 349 to 475 (YAVRLFYVNW…EGPYGGMKRD (127 aa)). An N-linked (GlcNAc...) asparagine glycan is attached at asparagine 357. 467-470 (GPYG) serves as a coordination point for NADP(+). Residues 482–502 (VVFFAGGSGITATASHLLNLI) form a helical membrane-spanning segment. N-linked (GlcNAc...) asparagine glycosylation occurs at asparagine 627. Residue 714–715 (CG) participates in NADP(+) binding.

The protein belongs to the ferric reductase (FRE) family. The cofactor is FAD. Heme serves as cofactor.

It is found in the cell membrane. It carries out the reaction 2 a Fe(II)-siderophore + NADP(+) + H(+) = 2 a Fe(III)-siderophore + NADPH. Probable cell surface ferric reductase that acts as a negative regulatory factor of growth and development. Involved in kojic acid production through the regulation of kojA expression. The chain is Probable cell surface ferric reductase kap2 from Aspergillus oryzae (strain ATCC 42149 / RIB 40) (Yellow koji mold).